The chain runs to 136 residues: Small ribosomal subunit protein uS19 (136 aa).

It belongs to the universal ribosomal protein uS19 family.

In terms of biological role, protein S19 forms a complex with S13 that binds strongly to the 16S ribosomal RNA. In Methanothrix thermoacetophila (strain DSM 6194 / JCM 14653 / NBRC 101360 / PT) (Methanosaeta thermophila), this protein is Small ribosomal subunit protein uS19.